We begin with the raw amino-acid sequence, 622 residues long: Chaperone protein DnaK (622 aa).

At Thr-197 the chain carries Phosphothreonine; by autocatalysis. Composition is skewed to basic and acidic residues over residues 515–528 and 575–614; these read LHKEEDRKRKEAVE and ASKEEIESKMKTLSEVSHKLAENMYKKDEKPSDDKKKKDD. Disordered stretches follow at residues 515-537 and 575-622; these read LHKEEDRKRKEAVEARNSADSLV and ASKE…AEVE.

Belongs to the heat shock protein 70 family.

Its function is as follows. Acts as a chaperone. This Campylobacter lari (strain RM2100 / D67 / ATCC BAA-1060) protein is Chaperone protein DnaK.